Consider the following 60-residue polypeptide: Large ribosomal subunit protein uL30 (60 aa).

This sequence belongs to the universal ribosomal protein uL30 family. As to quaternary structure, part of the 50S ribosomal subunit.

The sequence is that of Large ribosomal subunit protein uL30 from Staphylococcus epidermidis (strain ATCC 35984 / DSM 28319 / BCRC 17069 / CCUG 31568 / BM 3577 / RP62A).